We begin with the raw amino-acid sequence, 147 residues long: UPF0735 ACT domain-containing protein BH1214 (147 aa).

One can recognise an ACT domain in the interval 70–145 (TLSINLEDRS…AVEKVELVGS (76 aa)).

The protein belongs to the UPF0735 family.

This Halalkalibacterium halodurans (strain ATCC BAA-125 / DSM 18197 / FERM 7344 / JCM 9153 / C-125) (Bacillus halodurans) protein is UPF0735 ACT domain-containing protein BH1214.